Reading from the N-terminus, the 478-residue chain is Glycogen synthase (478 aa).

K15 contributes to the ADP-alpha-D-glucose binding site.

Belongs to the glycosyltransferase 1 family. Bacterial/plant glycogen synthase subfamily.

The catalysed reaction is [(1-&gt;4)-alpha-D-glucosyl](n) + ADP-alpha-D-glucose = [(1-&gt;4)-alpha-D-glucosyl](n+1) + ADP + H(+). It functions in the pathway glycan biosynthesis; glycogen biosynthesis. Synthesizes alpha-1,4-glucan chains using ADP-glucose. The chain is Glycogen synthase from Bacillus cytotoxicus (strain DSM 22905 / CIP 110041 / 391-98 / NVH 391-98).